Reading from the N-terminus, the 148-residue chain is Cofilin/actin-depolymerizing factor homolog (148 aa).

Positions 4–143 (GVTVSDVCKT…SREAVEEKLR (140 aa)) constitute an ADF-H domain. Residues 19 to 23 (KKDKK) carry the Nuclear localization signal motif.

It belongs to the actin-binding proteins ADF family. In terms of processing, phosphorylated in vitro by protein kinase LIMK1. Phosphorylation is required for inactivation of tsr and for cell proliferation and axon growth. Phosphorylation is negatively regulated by the panthothenate kinase fbl which catalyzes the first step in the conversion of panthothenic acid to coenzyme A. Dephosphorylated by protein phosphatase ssh which activates tsr.

Its subcellular location is the cytoplasm. It localises to the cytoskeleton. The protein localises to the nucleus matrix. In terms of biological role, exhibits F-actin depolymerizing activity and regulates actin cytoskeleton dynamics. Required for cytokinesis in both mitotic and meiotic cells and for aster migration and separation. Promotes cell motility during ovary development and oogenesis. During larval development, required for the cell rearrangement needed for formation of terminal filaments which are stacks of somatic cells that are important for the initiation of ovarioles. Also required for border cell migration during oogenesis. During border cell migration, required for actin turnover and lamellipodial protrusion. Required for the establishment of planar cell polarity (PCP) where cells adopt a uniform orientation within the plane of an epithelium. During establishment of PCP, required for the redistribution of the PCP core proteins fz and stan/fmi to the proximodistal cell boundary. During pupal development, required for elongation of the retinal cell body and for rhabdomere morphogenesis. Required for mushroom body neuroblast proliferation and axon growth. Plays a role in the positive regulation of protein secretion. Plays a role in the regulation of nuclear localization of actin. Required for the maintenance of epithelial integrity by controlling cell junctions and is also necessary for cell survival and tissue growth through regulation of JNK and yki signaling. The sequence is that of Cofilin/actin-depolymerizing factor homolog from Drosophila melanogaster (Fruit fly).